The sequence spans 414 residues: Esterase FrsA (414 aa).

The protein belongs to the FrsA family.

It catalyses the reaction a carboxylic ester + H2O = an alcohol + a carboxylate + H(+). Its function is as follows. Catalyzes the hydrolysis of esters. The protein is Esterase FrsA of Salmonella agona (strain SL483).